Reading from the N-terminus, the 81-residue chain is Photosystem I iron-sulfur center (81 aa).

2 consecutive 4Fe-4S ferredoxin-type domains span residues S2–W31 and I39–Y68. 8 residues coordinate [4Fe-4S] cluster: C11, C14, C17, C21, C48, C51, C54, and C58.

The eukaryotic PSI reaction center is composed of at least 11 subunits. It depends on [4Fe-4S] cluster as a cofactor.

It localises to the plastid. Its subcellular location is the chloroplast thylakoid membrane. The enzyme catalyses reduced [plastocyanin] + hnu + oxidized [2Fe-2S]-[ferredoxin] = oxidized [plastocyanin] + reduced [2Fe-2S]-[ferredoxin]. Its function is as follows. Apoprotein for the two 4Fe-4S centers FA and FB of photosystem I (PSI); essential for photochemical activity. FB is the terminal electron acceptor of PSI, donating electrons to ferredoxin. The C-terminus interacts with PsaA/B/D and helps assemble the protein into the PSI complex. Required for binding of PsaD and PsaE to PSI. PSI is a plastocyanin/cytochrome c6-ferredoxin oxidoreductase, converting photonic excitation into a charge separation, which transfers an electron from the donor P700 chlorophyll pair to the spectroscopically characterized acceptors A0, A1, FX, FA and FB in turn. The protein is Photosystem I iron-sulfur center of Emiliania huxleyi (Coccolithophore).